A 399-amino-acid chain; its full sequence is Tryptophan synthase beta chain (399 aa).

Lys90 carries the post-translational modification N6-(pyridoxal phosphate)lysine.

It belongs to the TrpB family. In terms of assembly, tetramer of two alpha and two beta chains. It depends on pyridoxal 5'-phosphate as a cofactor.

The catalysed reaction is (1S,2R)-1-C-(indol-3-yl)glycerol 3-phosphate + L-serine = D-glyceraldehyde 3-phosphate + L-tryptophan + H2O. The protein operates within amino-acid biosynthesis; L-tryptophan biosynthesis; L-tryptophan from chorismate: step 5/5. In terms of biological role, the beta subunit is responsible for the synthesis of L-tryptophan from indole and L-serine. This Lactiplantibacillus plantarum (strain ATCC BAA-793 / NCIMB 8826 / WCFS1) (Lactobacillus plantarum) protein is Tryptophan synthase beta chain.